The following is a 109-amino-acid chain: Non-structural protein of 12.7 kDa (109 aa).

Belongs to the coronaviruses ns12.7 protein family.

In Sus scrofa (Pig), this protein is Non-structural protein of 12.7 kDa.